A 90-amino-acid polypeptide reads, in one-letter code: Co-chaperonin GroES (90 aa).

Belongs to the GroES chaperonin family. As to quaternary structure, heptamer of 7 subunits arranged in a ring. Interacts with the chaperonin GroEL.

It localises to the cytoplasm. Its function is as follows. Together with the chaperonin GroEL, plays an essential role in assisting protein folding. The GroEL-GroES system forms a nano-cage that allows encapsulation of the non-native substrate proteins and provides a physical environment optimized to promote and accelerate protein folding. GroES binds to the apical surface of the GroEL ring, thereby capping the opening of the GroEL channel. The polypeptide is Co-chaperonin GroES (Helicobacter hepaticus (strain ATCC 51449 / 3B1)).